A 300-amino-acid chain; its full sequence is tRNA dimethylallyltransferase 2 (300 aa).

An ATP-binding site is contributed by 13-20; sequence GPTGVGKT. 15–20 provides a ligand contact to substrate; sequence TGVGKT. Residues 38-41 form an interaction with substrate tRNA region; the sequence is DSRQ.

The protein belongs to the IPP transferase family. In terms of assembly, monomer. Requires Mg(2+) as cofactor.

The enzyme catalyses adenosine(37) in tRNA + dimethylallyl diphosphate = N(6)-dimethylallyladenosine(37) in tRNA + diphosphate. Its function is as follows. Catalyzes the transfer of a dimethylallyl group onto the adenine at position 37 in tRNAs that read codons beginning with uridine, leading to the formation of N6-(dimethylallyl)adenosine (i(6)A). This chain is tRNA dimethylallyltransferase 2, found in Porphyromonas gingivalis (strain ATCC 33277 / DSM 20709 / CIP 103683 / JCM 12257 / NCTC 11834 / 2561).